The following is a 383-amino-acid chain: Succinyl-diaminopimelate desuccinylase (383 aa).

His-74 contributes to the Zn(2+) binding site. Asp-76 is a catalytic residue. Asp-107 lines the Zn(2+) pocket. Glu-141 functions as the Proton acceptor in the catalytic mechanism. 3 residues coordinate Zn(2+): Glu-142, Glu-170, and His-356.

This sequence belongs to the peptidase M20A family. DapE subfamily. Homodimer. Zn(2+) serves as cofactor. The cofactor is Co(2+).

It carries out the reaction N-succinyl-(2S,6S)-2,6-diaminopimelate + H2O = (2S,6S)-2,6-diaminopimelate + succinate. It participates in amino-acid biosynthesis; L-lysine biosynthesis via DAP pathway; LL-2,6-diaminopimelate from (S)-tetrahydrodipicolinate (succinylase route): step 3/3. Functionally, catalyzes the hydrolysis of N-succinyl-L,L-diaminopimelic acid (SDAP), forming succinate and LL-2,6-diaminopimelate (DAP), an intermediate involved in the bacterial biosynthesis of lysine and meso-diaminopimelic acid, an essential component of bacterial cell walls. In Cupriavidus taiwanensis (strain DSM 17343 / BCRC 17206 / CCUG 44338 / CIP 107171 / LMG 19424 / R1) (Ralstonia taiwanensis (strain LMG 19424)), this protein is Succinyl-diaminopimelate desuccinylase.